The primary structure comprises 396 residues: Elongation factor Tu (396 aa).

The 196-residue stretch at 10 to 205 (KSHANIGTIG…AVDEYIPTPE (196 aa)) folds into the tr-type G domain. Residues 19–26 (GHVDHGKT) form a G1 region. 19 to 26 (GHVDHGKT) contacts GTP. T26 provides a ligand contact to Mg(2+). Positions 61–65 (GITIS) are G2. The segment at 82–85 (DCPG) is G3. GTP is bound by residues 82–86 (DCPGH) and 137–140 (NKCD). Residues 137–140 (NKCD) form a G4 region. A G5 region spans residues 175-177 (SAL).

It belongs to the TRAFAC class translation factor GTPase superfamily. Classic translation factor GTPase family. EF-Tu/EF-1A subfamily. Monomer.

It localises to the cytoplasm. The catalysed reaction is GTP + H2O = GDP + phosphate + H(+). In terms of biological role, GTP hydrolase that promotes the GTP-dependent binding of aminoacyl-tRNA to the A-site of ribosomes during protein biosynthesis. The polypeptide is Elongation factor Tu (Bacillus licheniformis (strain ATCC 14580 / DSM 13 / JCM 2505 / CCUG 7422 / NBRC 12200 / NCIMB 9375 / NCTC 10341 / NRRL NRS-1264 / Gibson 46)).